A 119-amino-acid polypeptide reads, in one-letter code: Beta-2-microglobulin (119 aa).

Positions 1–20 (MARFVVVALLVLLSLSGLEA) are cleaved as a signal peptide. The Ig-like C1-type domain maps to 25-114 (PKIQVYSRHP…VTFSTPKTVK (90 aa)). C45 and C100 form a disulfide bridge.

Belongs to the beta-2-microglobulin family. In terms of assembly, heterodimer of an alpha chain and a beta chain. Beta-2-microglobulin is the beta-chain of major histocompatibility complex class I molecules.

It is found in the secreted. Functionally, component of the class I major histocompatibility complex (MHC). Involved in the presentation of peptide antigens to the immune system. This Callimico goeldii (Goeldi's marmoset) protein is Beta-2-microglobulin (B2M).